Reading from the N-terminus, the 310-residue chain is Homoserine kinase (310 aa).

Residue 91-101 (PIGSGLGSSAC) coordinates ATP.

Belongs to the GHMP kinase family. Homoserine kinase subfamily.

The protein localises to the cytoplasm. The catalysed reaction is L-homoserine + ATP = O-phospho-L-homoserine + ADP + H(+). It participates in amino-acid biosynthesis; L-threonine biosynthesis; L-threonine from L-aspartate: step 4/5. Functionally, catalyzes the ATP-dependent phosphorylation of L-homoserine to L-homoserine phosphate. The protein is Homoserine kinase of Escherichia coli (strain SE11).